A 169-amino-acid polypeptide reads, in one-letter code: Ubiquitin-fold modifier-conjugating enzyme 1 (169 aa).

Cys-116 serves as the catalytic Glycyl thioester intermediate.

This sequence belongs to the ubiquitin-conjugating enzyme family. UFC1 subfamily.

E2-like enzyme which forms an intermediate with UFM1 via a thioester linkage. The protein is Ubiquitin-fold modifier-conjugating enzyme 1 of Nematostella vectensis (Starlet sea anemone).